The following is a 91-amino-acid chain: Small ribosomal subunit protein uS19 (91 aa).

The protein belongs to the universal ribosomal protein uS19 family.

In terms of biological role, protein S19 forms a complex with S13 that binds strongly to the 16S ribosomal RNA. The chain is Small ribosomal subunit protein uS19 from Sphingopyxis alaskensis (strain DSM 13593 / LMG 18877 / RB2256) (Sphingomonas alaskensis).